Consider the following 343-residue polypeptide: Ribosomal RNA small subunit methyltransferase C (343 aa).

Belongs to the methyltransferase superfamily. RsmC family. In terms of assembly, monomer.

The protein localises to the cytoplasm. The enzyme catalyses guanosine(1207) in 16S rRNA + S-adenosyl-L-methionine = N(2)-methylguanosine(1207) in 16S rRNA + S-adenosyl-L-homocysteine + H(+). In terms of biological role, specifically methylates the guanine in position 1207 of 16S rRNA in the 30S particle. The polypeptide is Ribosomal RNA small subunit methyltransferase C (Shigella flexneri serotype 5b (strain 8401)).